The following is a 272-amino-acid chain: Probable glutathione S-transferase DHAR2, chloroplastic (272 aa).

Residues 1–57 (MAVLLRTTTSATTATSGGSSSATALLATTFRRGGRRLLLLPATRGSAPRRAALLTAR) constitute a chloroplast transit peptide. Residues Lys-68 and Asp-79 each contribute to the glutathione site. L-ascorbate contacts are provided by Lys-68 and Asp-79. A GST N-terminal domain is found at 70–148 (SLTVPDRLGD…AIEEKYPEPS (79 aa)). Cys-80 functions as the Nucleophile in the catalytic mechanism. Residues Lys-107, Val-120, Ser-133, His-219, and Trp-266 each contribute to the glutathione site. The GST C-terminal domain maps to 126–272 (EEQWVADSDV…IAGWRPKVMG (147 aa)). Lys-269 contributes to the L-ascorbate binding site.

This sequence belongs to the GST superfamily. DHAR family. In terms of assembly, monomer.

The protein resides in the plastid. The protein localises to the chloroplast. The enzyme catalyses RX + glutathione = an S-substituted glutathione + a halide anion + H(+). It carries out the reaction L-dehydroascorbate + 2 glutathione = glutathione disulfide + L-ascorbate. Involved in ascorbate homeostasis. Maintains redox pools of ascorbate by recycling dihydroascorbate (DHA) to ascorbate. Involved in scavenging reactive oxygen species (ROS) under oxidative stresses. This chain is Probable glutathione S-transferase DHAR2, chloroplastic, found in Oryza sativa subsp. japonica (Rice).